An 847-amino-acid polypeptide reads, in one-letter code: Bifunctional protein argC, mitochondrial (847 aa).

Positions 100–331 (QIVLVKIGGG…PPSTSITITS (232 aa)) are acetylglutamate kinase. Positions 352-508 (GEVMHSHESP…CLSQSSTYLS (157 aa)) constitute an N-acetyltransferase domain. Residues 531–846 (FRVGLIGARG…LDELASIKNE (316 aa)) form an N-acetyl-gamma-glutamyl-phosphate reductase region. Residue Cys665 is part of the active site.

In the N-terminal section; belongs to the acetylglutamate kinase family. This sequence in the C-terminal section; belongs to the NAGSA dehydrogenase family.

Its subcellular location is the mitochondrion. The catalysed reaction is N-acetyl-L-glutamate 5-semialdehyde + phosphate + NADP(+) = N-acetyl-L-glutamyl 5-phosphate + NADPH + H(+). It catalyses the reaction N-acetyl-L-glutamate + ATP = N-acetyl-L-glutamyl 5-phosphate + ADP. The protein operates within amino-acid biosynthesis; L-arginine biosynthesis; N(2)-acetyl-L-ornithine from L-glutamate: step 2/4. Its pathway is amino-acid biosynthesis; L-arginine biosynthesis; N(2)-acetyl-L-ornithine from L-glutamate: step 3/4. The sequence is that of Bifunctional protein argC, mitochondrial (argC) from Dictyostelium discoideum (Social amoeba).